A 272-amino-acid polypeptide reads, in one-letter code: 3-methyl-2-oxobutanoate hydroxymethyltransferase (272 aa).

Asp43 and Asp82 together coordinate Mg(2+). Residues Asp43–Ser44, Asp82, and Lys112 each bind 3-methyl-2-oxobutanoate. Glu114 provides a ligand contact to Mg(2+). Glu179 serves as the catalytic Proton acceptor.

The protein belongs to the PanB family. In terms of assembly, homodecamer; pentamer of dimers. Mg(2+) serves as cofactor.

The protein localises to the cytoplasm. The enzyme catalyses 3-methyl-2-oxobutanoate + (6R)-5,10-methylene-5,6,7,8-tetrahydrofolate + H2O = 2-dehydropantoate + (6S)-5,6,7,8-tetrahydrofolate. The protein operates within cofactor biosynthesis; (R)-pantothenate biosynthesis; (R)-pantoate from 3-methyl-2-oxobutanoate: step 1/2. Catalyzes the reversible reaction in which hydroxymethyl group from 5,10-methylenetetrahydrofolate is transferred onto alpha-ketoisovalerate to form ketopantoate. The sequence is that of 3-methyl-2-oxobutanoate hydroxymethyltransferase from Staphylococcus aureus (strain MRSA252).